The chain runs to 534 residues: Kelch repeat and BTB domain-containing protein 4 (534 aa).

Positions 1–25 (MKGGNADSWQREKLASMESPEEPGA) are disordered. One can recognise a BTB domain in the interval 61-128 (ADVTISVEGR…IYHGTVKLRA (68 aa)). The BACK domain maps to 163-255 (CLQVMWLADR…SLKEIGENVH (93 aa)). 5 Kelch repeats span residues 255–301 (HIYL…KHGG), 302–344 (DLYV…SVPG), 347–394 (AIYS…NLNG), 396–446 (IYLL…VHKD), and 448–497 (VFIV…VFRD).

As to quaternary structure, component of the BCR(KBTBD4) E3 ubiquitin ligase complex, at least composed of CUL3, KBTBD4 and RBX1.

Its function is as follows. Substrate-specific adapter of a BCR (BTB-CUL3-RBX1) E3 ubiquitin ligase complex which targets CoREST corepressor complex components RCOR1, KDM1A/LSD1 and HDAC2 for proteasomal degradation. RCOR1 is likely to be the primary target while degradation of KDM1A and HDAC2 is likely due to their association with RCOR1. Also targets RCOR3, MIER2 and MIER3 for proteasomal degradation as well as associated proteins ZNF217 and RREB1. Degradation is dependent on the presence of an ELM2 domain in the target proteins. This is Kelch repeat and BTB domain-containing protein 4 (KBTBD4) from Homo sapiens (Human).